Here is a 484-residue protein sequence, read N- to C-terminus: Cobyric acid synthase (484 aa).

Positions 248 to 435 constitute a GATase cobBQ-type domain; that stretch reads VLKVIVPVLP…LHGLFEGSQS (188 aa). The active-site Nucleophile is C329. Residue H427 is part of the active site.

The protein belongs to the CobB/CobQ family. CobQ subfamily.

It participates in cofactor biosynthesis; adenosylcobalamin biosynthesis. In terms of biological role, catalyzes amidations at positions B, D, E, and G on adenosylcobyrinic A,C-diamide. NH(2) groups are provided by glutamine, and one molecule of ATP is hydrogenolyzed for each amidation. The chain is Cobyric acid synthase from Pseudomonas putida (strain ATCC 700007 / DSM 6899 / JCM 31910 / BCRC 17059 / LMG 24140 / F1).